Reading from the N-terminus, the 361-residue chain is Tyrosine--tRNA ligase (361 aa).

Residues Y36, Y162, Q166, D169, and Q184 each coordinate L-tyrosine. Residues 236 to 240 (KMSKS) carry the 'KMSKS' region motif. K239 serves as a coordination point for ATP.

The protein belongs to the class-I aminoacyl-tRNA synthetase family. TyrS type 4 subfamily. As to quaternary structure, homodimer.

Its subcellular location is the cytoplasm. It carries out the reaction tRNA(Tyr) + L-tyrosine + ATP = L-tyrosyl-tRNA(Tyr) + AMP + diphosphate + H(+). Its function is as follows. Catalyzes the attachment of tyrosine to tRNA(Tyr) in a two-step reaction: tyrosine is first activated by ATP to form Tyr-AMP and then transferred to the acceptor end of tRNA(Tyr). This is Tyrosine--tRNA ligase from Saccharolobus islandicus (strain L.S.2.15 / Lassen #1) (Sulfolobus islandicus).